Reading from the N-terminus, the 286-residue chain is Phosphoribosylaminoimidazole-succinocarboxamide synthase (286 aa).

This sequence belongs to the SAICAR synthetase family.

The catalysed reaction is 5-amino-1-(5-phospho-D-ribosyl)imidazole-4-carboxylate + L-aspartate + ATP = (2S)-2-[5-amino-1-(5-phospho-beta-D-ribosyl)imidazole-4-carboxamido]succinate + ADP + phosphate + 2 H(+). Its pathway is purine metabolism; IMP biosynthesis via de novo pathway; 5-amino-1-(5-phospho-D-ribosyl)imidazole-4-carboxamide from 5-amino-1-(5-phospho-D-ribosyl)imidazole-4-carboxylate: step 1/2. In Pasteurella multocida (strain Pm70), this protein is Phosphoribosylaminoimidazole-succinocarboxamide synthase (purC).